We begin with the raw amino-acid sequence, 368 residues long: Ceramide synthase hyl-1 (368 aa).

Transmembrane regions (helical) follow at residues 27-47 (FVDL…RILW), 92-112 (ILEC…GLYV), 138-158 (IWWY…GSTF), 165-185 (FWQL…SWTI), 191-211 (GTLI…GKLV), 225-245 (FVLF…FIVI), and 275-295 (LIVF…FIIL). One can recognise a TLC domain in the interval 90–303 (KKILECFWRF…ILRIAYRTST (214 aa)). A disordered region spans residues 306-368 (QAKDVRSDSD…ARHRRAPRKE (63 aa)). The segment covering 343 to 353 (TDDDDDEGEEE) has biased composition (acidic residues). Positions 357 to 368 (RKARHRRAPRKE) are enriched in basic residues.

This sequence belongs to the sphingosine N-acyltransferase family.

The protein resides in the membrane. The enzyme catalyses a very long-chain fatty acyl-CoA + a sphingoid base = an N-(very-long-chain fatty acyl)-sphingoid base + CoA + H(+). The catalysed reaction is 15-methylhexadecasphinganine + a fatty acyl-CoA = an N-acyl-15-methylhexadecasphinganine + CoA + H(+). It catalyses the reaction a fatty acyl-CoA + sphinganine = an N-acylsphinganine + CoA + H(+). It carries out the reaction sphinganine + tetradecanoyl-CoA = N-(tetradecanoyl)-sphinganine + CoA + H(+). The enzyme catalyses hexacosanoyl-CoA + sphinganine = N-hexacosanoylsphinganine + CoA + H(+). It participates in lipid metabolism; sphingolipid metabolism. Catalyzes the acylation of sphingoid bases to form ceramides, which are key players in cell signaling events such as extending lifespan and enhancing stress resistance. C.elegans contain specific sphingoid bases, which are unique or different in structure compared to the sphingoid bases found in other animals. Two examples of these distinctive compounds are: 15-methylhexadecasphinganine and 15-methylhexadecasphing-4-enine. Exhibits substrate preference for fatty acyl-coA chains containing carbon chain length (C16-C18) and very long chains (24 carbons and more). This is Ceramide synthase hyl-1 (hyl-1) from Caenorhabditis elegans.